Reading from the N-terminus, the 380-residue chain is Zinc metalloproteinase-like protein nas-21 (380 aa).

Positions 1-24 (MNYFITFFFMHIAVLNFYFRFSNG) are cleaved as a signal peptide. A Peptidase M12A domain is found at 46–234 (QALRMDNEPR…LMINEYYQCS (189 aa)). Asparagine 87 carries an N-linked (GlcNAc...) asparagine glycan. Cystine bridges form between cysteine 90/cysteine 233 and cysteine 110/cysteine 130. Residue glutamate 138 is part of the active site. Residues asparagine 253, asparagine 269, asparagine 283, and asparagine 304 are each glycosylated (N-linked (GlcNAc...) asparagine).

The protein localises to the secreted. In terms of biological role, may lack metalloprotease activity. The sequence is that of Zinc metalloproteinase-like protein nas-21 (nas-21) from Caenorhabditis elegans.